A 599-amino-acid chain; its full sequence is BICD family-like cargo adapter 1 (599 aa).

Positions 1-27 (MELPISFLSDSSRPAASSERGDQAALG) are disordered. The CC1 box motif lies at 76–80 (AARLG). Residues 80-341 (GKALLERNQD…WEAHCQVRSL (262 aa)) are a coiled coil. The segment at 352-375 (DSAVSTDSSMDESSETSSAKDVPA) is disordered. Residues 405–536 (EDDGLEEQIK…LEAWQDDMHR (132 aa)) are a coiled coil.

The protein belongs to the BICDR family. Part of a tripartite complex with dynein and dynactin, acts an adapter linking the dynein motor complex and dynactin. Interacts with KIF1C. Interacts with RAB6A and RAB6B; interaction is specific to Rab6.

It is found in the cytoplasm. It localises to the cytoskeleton. The protein resides in the microtubule organizing center. Its subcellular location is the centrosome. In terms of biological role, acts as an adapter protein linking the dynein motor complex to various cargos and converts dynein from a non-processive to a highly processive motor in the presence of dynactin. Facilitates the interaction between dynein and dynactin and activates dynein processivity (the ability to move along a microtubule for a long distance without falling off the track). Predominantly recruits 2 dyneins, which increases both the force and speed of the microtubule motor. Component of secretory vesicle machinery in developing neurons that acts as a regulator of neurite outgrowth. Regulates the secretory vesicle transport by controlling the accumulation of Rab6-containing secretory vesicles in the pericentrosomal region restricting anterograde secretory transport during the early phase of neuronal differentiation, thereby inhibiting neuritogenesis. This chain is BICD family-like cargo adapter 1 (bicdl1), found in Xenopus tropicalis (Western clawed frog).